The primary structure comprises 68 residues: Large ribosomal subunit protein bL35 (68 aa).

It belongs to the bacterial ribosomal protein bL35 family.

The sequence is that of Large ribosomal subunit protein bL35 from Pelagibacter ubique (strain HTCC1062).